The following is a 103-amino-acid chain: Small ribosomal subunit protein uS10 (103 aa).

Belongs to the universal ribosomal protein uS10 family. In terms of assembly, part of the 30S ribosomal subunit.

In terms of biological role, involved in the binding of tRNA to the ribosomes. The sequence is that of Small ribosomal subunit protein uS10 from Salinibacter ruber (strain DSM 13855 / M31).